Reading from the N-terminus, the 87-residue chain is Putative regulatory protein BCG9842_B1272 (87 aa).

It belongs to the RemA family.

This chain is Putative regulatory protein BCG9842_B1272, found in Bacillus cereus (strain G9842).